The chain runs to 139 residues: Small ribosomal subunit protein bS6 (139 aa).

Residues 118-139 form a disordered region; that stretch reads SFKGGSKIETPTGSESTDIQEK. Polar residues predominate over residues 126-139; sequence ETPTGSESTDIQEK.

The protein belongs to the bacterial ribosomal protein bS6 family.

In terms of biological role, binds together with bS18 to 16S ribosomal RNA. The chain is Small ribosomal subunit protein bS6 from Borrelia garinii subsp. bavariensis (strain ATCC BAA-2496 / DSM 23469 / PBi) (Borreliella bavariensis).